Consider the following 141-residue polypeptide: Large ribosomal subunit protein uL11 (141 aa).

The protein belongs to the universal ribosomal protein uL11 family. As to quaternary structure, part of the ribosomal stalk of the 50S ribosomal subunit. Interacts with L10 and the large rRNA to form the base of the stalk. L10 forms an elongated spine to which L12 dimers bind in a sequential fashion forming a multimeric L10(L12)X complex. In terms of processing, one or more lysine residues are methylated.

Forms part of the ribosomal stalk which helps the ribosome interact with GTP-bound translation factors. In Roseobacter denitrificans (strain ATCC 33942 / OCh 114) (Erythrobacter sp. (strain OCh 114)), this protein is Large ribosomal subunit protein uL11.